A 380-amino-acid polypeptide reads, in one-letter code: Carbonic anhydrase 2 (380 aa).

Residues 1–20 (MARTGALLLAALALAGCAQA) form the signal peptide. The 285-residue stretch at 38–322 (DHWDHSLNGE…HHHRRLLHNH (285 aa)) folds into the Alpha-carbonic anhydrase domain. 3 cysteine pairs are disulfide-bonded: cysteine 61–cysteine 264, cysteine 194–cysteine 198, and cysteine 296–cysteine 354. The N-linked (GlcNAc...) asparagine glycan is linked to asparagine 101. Histidine 112 serves as the catalytic Proton acceptor. A glycan (N-linked (GlcNAc...) asparagine) is linked at asparagine 135. The Zn(2+) site is built by histidine 163, histidine 165, and histidine 182. Substrate is bound at residue 260-261 (TT). An N-linked (GlcNAc...) asparagine glycan is attached at asparagine 297.

Belongs to the alpha-carbonic anhydrase family. Tetramer of two large and two small subunits linked by two disulfide bonds. Zn(2+) is required as a cofactor.

It is found in the periplasm. It carries out the reaction hydrogencarbonate + H(+) = CO2 + H2O. In terms of biological role, reversible hydration of carbon dioxide. The chain is Carbonic anhydrase 2 (CAH2) from Chlamydomonas reinhardtii (Chlamydomonas smithii).